We begin with the raw amino-acid sequence, 560 residues long: NAD-dependent malic enzyme (560 aa).

The active-site Proton donor is the Y100. R153 contacts NAD(+). The Proton acceptor role is filled by K171. A divalent metal cation contacts are provided by E242, D243, and D266. Residues D266 and N413 each contribute to the NAD(+) site.

It belongs to the malic enzymes family. In terms of assembly, homotetramer. The cofactor is Mg(2+). Mn(2+) serves as cofactor.

It carries out the reaction (S)-malate + NAD(+) = pyruvate + CO2 + NADH. The catalysed reaction is oxaloacetate + H(+) = pyruvate + CO2. This Psychromonas ingrahamii (strain DSM 17664 / CCUG 51855 / 37) protein is NAD-dependent malic enzyme.